Here is a 1075-residue protein sequence, read N- to C-terminus: Carbamoyl phosphate synthase large chain (1075 aa).

Residues 1–403 (MPKRTDINTI…SLQKALRGLE (403 aa)) are carboxyphosphate synthetic domain. Arginine 129, arginine 169, glycine 175, glycine 176, glutamine 208, valine 210, glutamate 215, glycine 241, valine 242, histidine 243, glutamine 285, and glutamate 299 together coordinate ATP. In terms of domain architecture, ATP-grasp 1 spans 133–328 (KDAMTKIGLN…IAKVAAKLAV (196 aa)). Residues glutamine 285, glutamate 299, and asparagine 301 each contribute to the Mg(2+) site. Residues glutamine 285, glutamate 299, and asparagine 301 each coordinate Mn(2+). The tract at residues 404-548 (IGICGFNLRS…YSTYEDECEA (145 aa)) is oligomerization domain. A carbamoyl phosphate synthetic domain region spans residues 549–930 (KPTTRQKVMI…AYYKAQLGAG (382 aa)). Positions 673-864 (QKILTDLGLK…LAKIAALVMA (192 aa)) constitute an ATP-grasp 2 domain. Positions 709, 748, 750, 755, 780, 781, 782, 783, 823, and 835 each coordinate ATP. Mg(2+)-binding residues include glutamine 823, glutamate 835, and asparagine 837. Residues glutamine 823, glutamate 835, and asparagine 837 each contribute to the Mn(2+) site. The MGS-like domain occupies 931–1070 (ERIPSTGKVF…QQLHLSSALA (140 aa)). Residues 931-1075 (ERIPSTGKVF…SSALANQITR (145 aa)) are allosteric domain.

It belongs to the CarB family. As to quaternary structure, composed of two chains; the small (or glutamine) chain promotes the hydrolysis of glutamine to ammonia, which is used by the large (or ammonia) chain to synthesize carbamoyl phosphate. Tetramer of heterodimers (alpha,beta)4. The cofactor is Mg(2+). Mn(2+) is required as a cofactor.

It carries out the reaction hydrogencarbonate + L-glutamine + 2 ATP + H2O = carbamoyl phosphate + L-glutamate + 2 ADP + phosphate + 2 H(+). The enzyme catalyses hydrogencarbonate + NH4(+) + 2 ATP = carbamoyl phosphate + 2 ADP + phosphate + 2 H(+). It participates in amino-acid biosynthesis; L-arginine biosynthesis; carbamoyl phosphate from bicarbonate: step 1/1. Its pathway is pyrimidine metabolism; UMP biosynthesis via de novo pathway; (S)-dihydroorotate from bicarbonate: step 1/3. Its function is as follows. Large subunit of the glutamine-dependent carbamoyl phosphate synthetase (CPSase). CPSase catalyzes the formation of carbamoyl phosphate from the ammonia moiety of glutamine, carbonate, and phosphate donated by ATP, constituting the first step of 2 biosynthetic pathways, one leading to arginine and/or urea and the other to pyrimidine nucleotides. The large subunit (synthetase) binds the substrates ammonia (free or transferred from glutamine from the small subunit), hydrogencarbonate and ATP and carries out an ATP-coupled ligase reaction, activating hydrogencarbonate by forming carboxy phosphate which reacts with ammonia to form carbamoyl phosphate. The polypeptide is Carbamoyl phosphate synthase large chain (Haemophilus ducreyi (strain 35000HP / ATCC 700724)).